A 101-amino-acid polypeptide reads, in one-letter code: Urease subunit beta (101 aa).

The protein belongs to the urease beta subunit family. Heterotrimer of UreA (gamma), UreB (beta) and UreC (alpha) subunits. Three heterotrimers associate to form the active enzyme.

It localises to the cytoplasm. It catalyses the reaction urea + 2 H2O + H(+) = hydrogencarbonate + 2 NH4(+). The protein operates within nitrogen metabolism; urea degradation; CO(2) and NH(3) from urea (urease route): step 1/1. This chain is Urease subunit beta, found in Agrobacterium fabrum (strain C58 / ATCC 33970) (Agrobacterium tumefaciens (strain C58)).